The chain runs to 494 residues: Probable cytochrome P450 313a4 (494 aa).

Cys-440 is a binding site for heme.

It belongs to the cytochrome P450 family. Heme is required as a cofactor.

Its subcellular location is the endoplasmic reticulum membrane. The protein resides in the microsome membrane. In terms of biological role, may be involved in the metabolism of insect hormones and in the breakdown of synthetic insecticides. The sequence is that of Probable cytochrome P450 313a4 (Cyp313a4) from Drosophila melanogaster (Fruit fly).